The sequence spans 462 residues: Argininosuccinate lyase (462 aa).

It belongs to the lyase 1 family. Argininosuccinate lyase subfamily.

The protein resides in the cytoplasm. The enzyme catalyses 2-(N(omega)-L-arginino)succinate = fumarate + L-arginine. It functions in the pathway amino-acid biosynthesis; L-arginine biosynthesis; L-arginine from L-ornithine and carbamoyl phosphate: step 3/3. The chain is Argininosuccinate lyase from Dechloromonas aromatica (strain RCB).